A 508-amino-acid polypeptide reads, in one-letter code: Photosystem II CP47 reaction center protein (508 aa).

6 helical membrane-spanning segments follow: residues 21-36, 101-115, 140-156, 203-218, 237-252, and 457-472; these read SVHL…WAGS, IILS…IWHW, GVHL…FGVF, IAAG…FHVL, VLSS…AFVV, and SFAL…HGAR.

This sequence belongs to the PsbB/PsbC family. PsbB subfamily. PSII is composed of 1 copy each of membrane proteins PsbA, PsbB, PsbC, PsbD, PsbE, PsbF, PsbH, PsbI, PsbJ, PsbK, PsbL, PsbM, PsbT, PsbY, PsbZ, Psb30/Ycf12, at least 3 peripheral proteins of the oxygen-evolving complex and a large number of cofactors. It forms dimeric complexes. The cofactor is Binds multiple chlorophylls. PSII binds additional chlorophylls, carotenoids and specific lipids..

The protein resides in the plastid. Its subcellular location is the chloroplast thylakoid membrane. Functionally, one of the components of the core complex of photosystem II (PSII). It binds chlorophyll and helps catalyze the primary light-induced photochemical processes of PSII. PSII is a light-driven water:plastoquinone oxidoreductase, using light energy to abstract electrons from H(2)O, generating O(2) and a proton gradient subsequently used for ATP formation. The polypeptide is Photosystem II CP47 reaction center protein (Euglena gracilis).